An 878-amino-acid polypeptide reads, in one-letter code: Aconitate hydratase A (878 aa).

The [4Fe-4S] cluster site is built by C426, C492, and C495.

Belongs to the aconitase/IPM isomerase family. As to quaternary structure, monomer. Requires [4Fe-4S] cluster as cofactor.

The catalysed reaction is citrate = D-threo-isocitrate. The enzyme catalyses (2S,3R)-3-hydroxybutane-1,2,3-tricarboxylate = 2-methyl-cis-aconitate + H2O. Its pathway is carbohydrate metabolism; tricarboxylic acid cycle; isocitrate from oxaloacetate: step 2/2. It functions in the pathway organic acid metabolism; propanoate degradation. In terms of biological role, involved in the catabolism of short chain fatty acids (SCFA) via the tricarboxylic acid (TCA)(acetyl degradation route) and probably the 2-methylcitrate cycle I (propionate degradation route). Catalyzes the reversible isomerization of citrate to isocitrate via cis-aconitate. Could catalyze the hydration of 2-methyl-cis-aconitate to yield (2R,3S)-2-methylisocitrate. The apo form of AcnA functions as a RNA-binding regulatory protein. The polypeptide is Aconitate hydratase A (acnA) (Rickettsia prowazekii (strain Madrid E)).